Consider the following 511-residue polypeptide: Sulfate adenylyltransferase (511 aa).

Residues 1–167 (MPAPHGGILQ…LEAIQLPQHY (167 aa)) are N-terminal. Residues 168 to 393 (DYPGLRKTPA…LRESNPPRPK (226 aa)) form a catalytic region. Sulfate is bound at residue Q195. Residues 195–198 (QTRN) and 289–292 (GRDH) each bind ATP. Residues T196, R197, and N198 contribute to the active site. R197 is a sulfate binding site. Residue A293 participates in sulfate binding. An ATP-binding site is contributed by V331. Residues 394–511 (QGFSIVLGNS…FLEDNGFFVF (118 aa)) are required for oligomerization; adenylyl-sulfate kinase-like.

It belongs to the sulfate adenylyltransferase family. Homohexamer. Dimer of trimers.

Its subcellular location is the cytoplasm. The enzyme catalyses sulfate + ATP + H(+) = adenosine 5'-phosphosulfate + diphosphate. Its pathway is sulfur metabolism; hydrogen sulfide biosynthesis; sulfite from sulfate: step 1/3. Functionally, catalyzes the first intracellular reaction of sulfate assimilation, forming adenosine-5'-phosphosulfate (APS) from inorganic sulfate and ATP. Plays an important role in sulfate activation as a component of the biosynthesis pathway of sulfur-containing amino acids. The chain is Sulfate adenylyltransferase from Saccharomyces cerevisiae (strain ATCC 204508 / S288c) (Baker's yeast).